The primary structure comprises 89 residues: Small ribosomal subunit protein uS15 (89 aa).

This sequence belongs to the universal ribosomal protein uS15 family. As to quaternary structure, part of the 30S ribosomal subunit. Forms a bridge to the 50S subunit in the 70S ribosome, contacting the 23S rRNA.

One of the primary rRNA binding proteins, it binds directly to 16S rRNA where it helps nucleate assembly of the platform of the 30S subunit by binding and bridging several RNA helices of the 16S rRNA. In terms of biological role, forms an intersubunit bridge (bridge B4) with the 23S rRNA of the 50S subunit in the ribosome. This chain is Small ribosomal subunit protein uS15, found in Pelodictyon phaeoclathratiforme (strain DSM 5477 / BU-1).